A 164-amino-acid chain; its full sequence is MATKVSQIATTKVYVVKPNVTIAEAAKEMKEHNLGSLVVIDSQNRVVGIITERDIVKAASNRDIDSPVEKYMTKDVKGVTEDTEVTDALDIMLNNGFRHLPIIKSNGKLYGIVSIRDLARALLDVHTMQFGKPAEEVKGTGVICPVCGMEIDEYGYCGCGTGSG.

CBS domains follow at residues 9–66 and 72–128; these read ATTK…DIDS and MTKD…VHTM.

This is an uncharacterized protein from Acidianus ambivalens (Desulfurolobus ambivalens).